A 1040-amino-acid polypeptide reads, in one-letter code: Myoblast growth factor receptor egl-15 (1040 aa).

An N-terminal signal peptide occupies residues 1-19 (MSYFLASCLGVGLLSTVSC). The Extracellular portion of the chain corresponds to 20–525 (SLQGLTSHYR…PKIDRWTTSD (506 aa)). An Ig-like C2-type 1 domain is found at 33–125 (PRFKHVANER…GQISRNFTVE (93 aa)). A disulfide bond links cysteine 55 and cysteine 109. N-linked (GlcNAc...) asparagine glycosylation is present at asparagine 121. Basic and acidic residues predominate over residues 234-257 (VHDSEESPSESRTEFINADEKENK). A disordered region spans residues 234–267 (VHDSEESPSESRTEFINADEKENKEDEEEDYSVS). 2 N-linked (GlcNAc...) asparagine glycosylation sites follow: asparagine 280 and asparagine 299. 2 Ig-like C2-type domains span residues 287–383 (PYFK…FHVI) and 391–501 (PPII…ATLT). A disulfide bridge connects residues cysteine 314 and cysteine 367. Residues asparagine 401, asparagine 407, asparagine 433, asparagine 440, asparagine 449, asparagine 474, and asparagine 497 are each glycosylated (N-linked (GlcNAc...) asparagine). Cysteine 414 and cysteine 485 are joined by a disulfide. A helical transmembrane segment spans residues 526-549 (YIFTTILLFLLLAATLFGILFMVC). At 550 to 1040 (KQTLHKKGFM…NNNSMSKPEF (491 aa)) the chain is on the cytoplasmic side. Residues 640–931 (LSLVHMLGEG…KTIVDYLDWM (292 aa)) form the Protein kinase domain. Residues 646-654 (LGEGAFGEV) and lysine 672 contribute to the ATP site. Aspartate 797 functions as the Proton acceptor in the catalytic mechanism. Tyrosine 828 bears the Phosphotyrosine; by autocatalysis mark. 2 disordered regions span residues 952-984 (ERST…LPSE) and 1021-1040 (TPET…KPEF). Residues 1022–1040 (PETSQRIPSNNNSMSKPEF) show a composition bias toward polar residues.

It belongs to the protein kinase superfamily. Tyr protein kinase family. Fibroblast growth factor receptor subfamily. Mg(2+) serves as cofactor. In terms of processing, activity is regulated by the phosphatase clr-1, however it is not known whether clr-1 acts directly on egl-15.

The protein resides in the membrane. The enzyme catalyses L-tyrosyl-[protein] + ATP = O-phospho-L-tyrosyl-[protein] + ADP + H(+). Receptor tyrosine kinase required for larval development. May phosphorylate adapter protein soc-1 which in turn may result in the recruitment and/or activation of phosphatase ptp-2. May activate the Ras/MAPK kinase signaling pathway which includes sem-5, sos-1, let-60/Ras, lin-45/Raf, mek-2 and mpk-1. Acts in the hypodermis to regulate axon growth and fluid homeostasis. Activates protein degradation in muscles. Probably following interaction with ligand let-756, negatively regulates membrane protrusion from body wall muscles during larval development. Plays a role in nicotinic acetylcholine receptor (nAChR)-mediated sensitivity to nicotine. Regulates synaptic levels of nAChR subunit lev-1 in the nerve cord. In terms of biological role, affects the maintenance of axon position without affecting axon growth. Interaction with egl-17 is required for the guidance of sex myoblast migration during gonad development. Its function is as follows. Interaction with let-756 appears to play a role in maintaining body morphology at higher temperatures. The polypeptide is Myoblast growth factor receptor egl-15 (egl-15) (Caenorhabditis elegans).